The following is a 582-amino-acid chain: MLNDKDLSTWQTFRRLWPMISPFKTGLIVAAIALILNAASDTFMLSLLKPLLDDGFGKANSNILVWMPLVVIGLMVLRGVSGFVSSYCVSWVSGKVIMNMRRRLFNHMMDMPVSFFDQQSTGTLLSRITYDSEQVASSSSGALITVIREGASIIGLFAMMFYYSWQLSLILVVIAPVVSFAIRQVSKRFRQISKRMQNTMGQVTTSAEQMLKGHKEVLIFGGQKVENERFNSVSNRMRQQGMKMVAASSVSDPLIQFIASLALAFVLYAASFPSVMETLTAGTITVVFSSMIALMRPLKSLTNVNAQFQRGMAACQTLFSILDMETEKDEGTVEVERVKGDIAFDHVTFSYPGKETPSLHDISLSIPTGHTVALVGRSGSGKSTIANLLTRFYDIQQGQILLDGTDLRAYKLASLRNQVALVSQNVHLFNDTIANNIAYARKATYSRKQIENAARMAYAMDFIEKMDQGLDTVIGENGVLLSGGQRQRIAIARALLRDCPILILDEATSALDTESERAIQKALDALQKNRTSLVIAHRLSTIEKADEILVVVEGRIVERGNHEELMSRQGVYAQLHQLQFGQ.

5 helical membrane-spanning segments follow: residues 16–36, 63–83, 153–173, 253–273, and 275–295; these read LWPM…ALIL, ILVW…VSGF, IIGL…ILVV, PLIQ…ASFP, and VMET…IALM. The region spanning 28–310 is the ABC transmembrane type-1 domain; the sequence is IVAAIALILN…LTNVNAQFQR (283 aa). The ABC transporter domain maps to 342 to 578; sequence IAFDHVTFSY…QGVYAQLHQL (237 aa). Position 376–383 (376–383) interacts with ATP; the sequence is GRSGSGKS.

Belongs to the ABC transporter superfamily. Lipid exporter (TC 3.A.1.106) family. In terms of assembly, homodimer.

It localises to the cell inner membrane. The catalysed reaction is ATP + H2O + lipid A-core oligosaccharideSide 1 = ADP + phosphate + lipid A-core oligosaccharideSide 2.. In terms of biological role, involved in lipopolysaccharide (LPS) biosynthesis. Translocates lipid A-core from the inner to the outer leaflet of the inner membrane. Transmembrane domains (TMD) form a pore in the inner membrane and the ATP-binding domain (NBD) is responsible for energy generation. This is ATP-dependent lipid A-core flippase from Sodalis glossinidius (strain morsitans).